Here is a 48-residue protein sequence, read N- to C-terminus: DNA-directed RNA polymerase subunit Rpo12 (48 aa).

Positions 9, 26, and 29 each coordinate Zn(2+).

It belongs to the archaeal Rpo12/eukaryotic RPC10 RNA polymerase subunit family. In terms of assembly, part of the RNA polymerase complex. The cofactor is Zn(2+).

Its subcellular location is the cytoplasm. It carries out the reaction RNA(n) + a ribonucleoside 5'-triphosphate = RNA(n+1) + diphosphate. Functionally, DNA-dependent RNA polymerase (RNAP) catalyzes the transcription of DNA into RNA using the four ribonucleoside triphosphates as substrates. The protein is DNA-directed RNA polymerase subunit Rpo12 of Sulfurisphaera tokodaii (strain DSM 16993 / JCM 10545 / NBRC 100140 / 7) (Sulfolobus tokodaii).